Consider the following 434-residue polypeptide: ATP-dependent protease ATPase subunit HslU (434 aa).

ATP-binding positions include Val-18, 60-65 (GVGKTE), Asp-247, Glu-312, and Arg-384.

This sequence belongs to the ClpX chaperone family. HslU subfamily. In terms of assembly, a double ring-shaped homohexamer of HslV is capped on each side by a ring-shaped HslU homohexamer. The assembly of the HslU/HslV complex is dependent on binding of ATP.

The protein localises to the cytoplasm. Functionally, ATPase subunit of a proteasome-like degradation complex; this subunit has chaperone activity. The binding of ATP and its subsequent hydrolysis by HslU are essential for unfolding of protein substrates subsequently hydrolyzed by HslV. HslU recognizes the N-terminal part of its protein substrates and unfolds these before they are guided to HslV for hydrolysis. The protein is ATP-dependent protease ATPase subunit HslU of Bradyrhizobium diazoefficiens (strain JCM 10833 / BCRC 13528 / IAM 13628 / NBRC 14792 / USDA 110).